Here is a 381-residue protein sequence, read N- to C-terminus: Chaperone protein DnaJ (381 aa).

A J domain is found at 5–70 (DFYEVLGVSR…QKKAAYDQYG (66 aa)). The CR-type zinc finger occupies 136–214 (GVSKEIEVPT…CHGQGRKQKT (79 aa)). Positions 149, 152, 166, 169, 188, 191, 202, and 205 each coordinate Zn(2+). CXXCXGXG motif repeat units lie at residues 149–156 (CDICDGSG), 166–173 (CGTCHGHG), 188–195 (CPTCNGKG), and 202–209 (CNSCHGQG).

This sequence belongs to the DnaJ family. As to quaternary structure, homodimer. Zn(2+) is required as a cofactor.

It is found in the cytoplasm. Participates actively in the response to hyperosmotic and heat shock by preventing the aggregation of stress-denatured proteins and by disaggregating proteins, also in an autonomous, DnaK-independent fashion. Unfolded proteins bind initially to DnaJ; upon interaction with the DnaJ-bound protein, DnaK hydrolyzes its bound ATP, resulting in the formation of a stable complex. GrpE releases ADP from DnaK; ATP binding to DnaK triggers the release of the substrate protein, thus completing the reaction cycle. Several rounds of ATP-dependent interactions between DnaJ, DnaK and GrpE are required for fully efficient folding. Also involved, together with DnaK and GrpE, in the DNA replication of plasmids through activation of initiation proteins. This Vibrio atlanticus (strain LGP32) (Vibrio splendidus (strain Mel32)) protein is Chaperone protein DnaJ.